The primary structure comprises 212 residues: uncharacterized protein (212 aa).

The S-adenosyl-L-methionine site is built by Gly-53, Glu-74, and Asp-97.

This sequence belongs to the methyltransferase superfamily. YrrT family.

Functionally, could be a S-adenosyl-L-methionine-dependent methyltransferase. This is an uncharacterized protein from Bacillus cereus (strain ZK / E33L).